The following is a 463-amino-acid chain: L-seryl-tRNA(Sec) selenium transferase (463 aa).

Position 295 is an N6-(pyridoxal phosphate)lysine (K295).

It belongs to the SelA family. In terms of assembly, homodecamer; pentamer of dimers. Binds only one seryl-tRNA(Sec) per dimer. Pyridoxal 5'-phosphate is required as a cofactor.

The protein localises to the cytoplasm. The enzyme catalyses L-seryl-tRNA(Sec) + selenophosphate + H(+) = L-selenocysteinyl-tRNA(Sec) + phosphate. It functions in the pathway aminoacyl-tRNA biosynthesis; selenocysteinyl-tRNA(Sec) biosynthesis; selenocysteinyl-tRNA(Sec) from L-seryl-tRNA(Sec) (bacterial route): step 1/1. Converts seryl-tRNA(Sec) to selenocysteinyl-tRNA(Sec) required for selenoprotein biosynthesis. The sequence is that of L-seryl-tRNA(Sec) selenium transferase from Salmonella typhimurium (strain LT2 / SGSC1412 / ATCC 700720).